The primary structure comprises 377 residues: Peroxisomal membrane protein PEX14 (377 aa).

Residues 1 to 15 are compositionally biased toward low complexity; the sequence is MASSEQAEQPSQPSS. Residues 1–24 are disordered; sequence MASSEQAEQPSQPSSTPGSENVLP. Ala2 is subject to N-acetylalanine. Topologically, residues 2–108 are peroxisomal matrix; it reads ASSEQAEQPS…YSPAGSRWRD (107 aa). An N6-acetyllysine modification is found at Lys34. A helical membrane pass occupies residues 109–126; it reads YGALAIIMAGIAFGFHQL. The Cytoplasmic portion of the chain corresponds to 127-377; it reads YKKYLLPLIL…EGASNESERD (251 aa). A disordered region spans residues 230–377; the sequence is PPSPSAPKIP…EGASNESERD (148 aa). A Phosphoserine modification is found at Ser232. 2 stretches are compositionally biased toward low complexity: residues 244-259 and 265-275; these read PVKS…VNHH and SPVSNESTSSS. 2 positions are modified to phosphoserine: Ser282 and Ser335. A compositionally biased stretch (acidic residues) spans 323–342; sequence KEDEEDEEDDDVSHVDEEDC. Positions 360-377 are enriched in basic and acidic residues; sequence QVEKLRRPEGASNESERD.

It belongs to the peroxin-14 family. As to quaternary structure, interacts with PEX13; forming the PEX13-PEX14 docking complex. Interacts with PEX5 (via WxxxF/Y motifs). Interacts with PEX19. Interacts with tubulin.

The protein localises to the peroxisome membrane. Component of the PEX13-PEX14 docking complex, a translocon channel that specifically mediates the import of peroxisomal cargo proteins bound to PEX5 receptor. The PEX13-PEX14 docking complex forms a large import pore which can be opened to a diameter of about 9 nm. Mechanistically, PEX5 receptor along with cargo proteins associates with the PEX14 subunit of the PEX13-PEX14 docking complex in the cytosol, leading to the insertion of the receptor into the organelle membrane with the concomitant translocation of the cargo into the peroxisome matrix. Plays a key role for peroxisome movement through a direct interaction with tubulin. The chain is Peroxisomal membrane protein PEX14 from Homo sapiens (Human).